The sequence spans 606 residues: MNIEEKLTTSIISAIKTLYGQDVPGKMVQLQKTKKEFEGHLTLVVFPFLKMSKKGPEQTAQEIGGYLKEHAPELVSAYNAVKGFLNLTIASDCWIELLNSIQAAPEYGIEKATENSPLVMIEYSSPNTNKPLHLGHVRNNLLGNALANVMAANGNKVVKTNIVNDRGIHICKSMLAWLKYGNGETPESSGKKGDHLIGDYYVAFDKHYKAEVKELTAQYQAEGLNEEEAKAKAEANSPLMLEAREMLRKWEANDPEIRALWKKMNDWVYAGFDETYKMMGVSFDKIYYESNTYLEGKEKVMEGLEKGFFYRKEDNSVWADLTAEGLDHKLLLRGDGTSVYMTQDIGTAKLRFQDYPINKMIYVVGNEQNYHFQVLSILLDKLGFEWGKGLVHFSYGMVELPEGKMKSREGTVVDADDLMEAMIETAKETSAELGKLDGLTQEEADNIARIVGLGALKYFILKVDARKNMTFNPKESIDFNGNTGPFIQYTYARIQSVLRKAAEAGIVIPEIIPAGLELSAKEEGLIQMLADFKSVVKQAGSDYNPSIIANYAYDLVKEYNQFYHDFSILREENEALKVFRLALSANVGKIVKTAMGLLGIEVPERM.

Positions 126–136 (PNTNKPLHLGH) match the 'HIGH' region motif.

The protein belongs to the class-I aminoacyl-tRNA synthetase family. As to quaternary structure, monomer.

The protein localises to the cytoplasm. It catalyses the reaction tRNA(Arg) + L-arginine + ATP = L-arginyl-tRNA(Arg) + AMP + diphosphate. This is Arginine--tRNA ligase from Phocaeicola vulgatus (strain ATCC 8482 / DSM 1447 / JCM 5826 / CCUG 4940 / NBRC 14291 / NCTC 11154) (Bacteroides vulgatus).